A 294-amino-acid chain; its full sequence is tRNA dimethylallyltransferase (294 aa).

An ATP-binding site is contributed by 10–17 (GPTAVGKT). A substrate-binding site is contributed by 12–17 (TAVGKT). Residues 35-38 (DSQQ) are interaction with substrate tRNA.

It belongs to the IPP transferase family. As to quaternary structure, monomer. Mg(2+) serves as cofactor.

The enzyme catalyses adenosine(37) in tRNA + dimethylallyl diphosphate = N(6)-dimethylallyladenosine(37) in tRNA + diphosphate. Functionally, catalyzes the transfer of a dimethylallyl group onto the adenine at position 37 in tRNAs that read codons beginning with uridine, leading to the formation of N6-(dimethylallyl)adenosine (i(6)A). This is tRNA dimethylallyltransferase from Streptococcus pneumoniae (strain ATCC 700669 / Spain 23F-1).